A 308-amino-acid chain; its full sequence is F-actin-capping protein subunit alpha (308 aa).

The protein belongs to the F-actin-capping protein alpha subunit family. Component of the F-actin capping complex, composed of a heterodimer of an alpha and a beta subunit.

In terms of biological role, F-actin-capping proteins bind in a Ca(2+)-independent manner to the fast growing ends of actin filaments (barbed end) thereby blocking the exchange of subunits at these ends. Unlike other capping proteins (such as gelsolin and severin), these proteins do not sever actin filaments. This is F-actin-capping protein subunit alpha from Arabidopsis thaliana (Mouse-ear cress).